A 132-amino-acid chain; its full sequence is tRNA (cytidine(56)-2'-O)-methyltransferase (132 aa).

Residues leucine 35, 65–69, and 83–90 each bind S-adenosyl-L-methionine; these read GSEKV and IGNQPHSE.

It belongs to the aTrm56 family. Homodimer.

Its subcellular location is the cytoplasm. The catalysed reaction is cytidine(56) in tRNA + S-adenosyl-L-methionine = 2'-O-methylcytidine(56) in tRNA + S-adenosyl-L-homocysteine + H(+). Specifically catalyzes the AdoMet-dependent 2'-O-ribose methylation of cytidine at position 56 in tRNAs. The chain is tRNA (cytidine(56)-2'-O)-methyltransferase from Sulfolobus acidocaldarius (strain ATCC 33909 / DSM 639 / JCM 8929 / NBRC 15157 / NCIMB 11770).